The chain runs to 193 residues: dCTP deaminase (193 aa).

Residues 110 to 115 (RSSLAR), Asp-128, 136 to 138 (VLE), Tyr-171, Lys-178, and Gln-182 contribute to the dCTP site. Glu-138 functions as the Proton donor/acceptor in the catalytic mechanism. The segment at 169–193 (RPYNRRQDAKYRDQQGAVASRIDKD) is disordered.

Belongs to the dCTP deaminase family. As to quaternary structure, homotrimer.

It carries out the reaction dCTP + H2O + H(+) = dUTP + NH4(+). It functions in the pathway pyrimidine metabolism; dUMP biosynthesis; dUMP from dCTP (dUTP route): step 1/2. In terms of biological role, catalyzes the deamination of dCTP to dUTP. This is dCTP deaminase from Cronobacter sakazakii (strain ATCC BAA-894) (Enterobacter sakazakii).